The chain runs to 195 residues: Toxin protein Tse4 (195 aa).

4 helical membrane passes run 20–40, 116–136, 140–160, and 171–191; these read ASGGGMTVAFLAGSGGSITLL, YVELGAGVIAGGSGTAILFGL, LLAAVALASASPLTAALGASM, and ALLMAGVNVGAQFGGGAAAYL.

It localises to the host membrane. The protein resides in the secreted. Functionally, toxin secreted by the H1 type VI (H1-T6SS) secretion system into the periplasm of recipient cells. The polypeptide is Toxin protein Tse4 (Pseudomonas aeruginosa (strain ATCC 15692 / DSM 22644 / CIP 104116 / JCM 14847 / LMG 12228 / 1C / PRS 101 / PAO1)).